Reading from the N-terminus, the 240-residue chain is Peptidyl-tRNA hydrolase (240 aa).

A tRNA-binding site is contributed by Tyr14. His19 serves as the catalytic Proton acceptor. Positions 64, 66, and 112 each coordinate tRNA. A disordered region spans residues 196–227; that stretch reads EKPAQKQQPKQQSHIRQARSQQAPAKLPETGP. Polar residues predominate over residues 209 to 218; that stretch reads HIRQARSQQA.

This sequence belongs to the PTH family. Monomer.

It localises to the cytoplasm. It carries out the reaction an N-acyl-L-alpha-aminoacyl-tRNA + H2O = an N-acyl-L-amino acid + a tRNA + H(+). Hydrolyzes ribosome-free peptidyl-tRNAs (with 1 or more amino acids incorporated), which drop off the ribosome during protein synthesis, or as a result of ribosome stalling. In terms of biological role, catalyzes the release of premature peptidyl moieties from peptidyl-tRNA molecules trapped in stalled 50S ribosomal subunits, and thus maintains levels of free tRNAs and 50S ribosomes. In Mesorhizobium japonicum (strain LMG 29417 / CECT 9101 / MAFF 303099) (Mesorhizobium loti (strain MAFF 303099)), this protein is Peptidyl-tRNA hydrolase.